We begin with the raw amino-acid sequence, 598 residues long: UvrABC system protein C (598 aa).

The 78-residue stretch at Asp14–Ile91 folds into the GIY-YIG domain. The UVR domain occupies Thr196–Val231.

It belongs to the UvrC family. Interacts with UvrB in an incision complex.

It localises to the cytoplasm. Functionally, the UvrABC repair system catalyzes the recognition and processing of DNA lesions. UvrC both incises the 5' and 3' sides of the lesion. The N-terminal half is responsible for the 3' incision and the C-terminal half is responsible for the 5' incision. The chain is UvrABC system protein C from Enterococcus faecalis (strain ATCC 700802 / V583).